A 519-amino-acid polypeptide reads, in one-letter code: MNFDLKTLELAAAAAEKCDLLLVLIPEGFTPGQDALSTLAALALKNGDLLLKAGKHLQLYQVPAVAARRVILLGVGDGTARAVRQALLALGAEIKKPQTKRLVLCFAAALKAGVASAAVQAVAEASYVYTTTKSKAEARSLSRCVLGVPDAAGARPGFDCGVALVAGVEFAREWSNRPANHATPSLLADAAKTLGRLPHIQCKVHGPAQVRRLGMGAFVAVARGSEQPLRFIELRYSAAAKDQAPIVLVGKGITFDSGGISIKPAPEMDEMKFDMCGAASVLGVFRALGELQPAINVLGLIPACENLPDGRAIKPGDVVTSMSGQTIEILNTDAEGRLILCDALTYAARFKPAAVIDIATLTGACVVALAGVRSGLFANDDDLAVSLYEAGEAALDPCWRMPLDDDYADGLKSHFADMGNTAGRSGGAITAAKFLQKFVAGMRWAHLDIAGIAYKSGPAKGATGRPVGLLVHYLLAQAEAMAQQAPVAPAAPAAPAAPAARPAAKRTGRSQGGLKRTAP.

K251 and D256 together coordinate Mn(2+). K263 is an active-site residue. Positions 274, 333, and 335 each coordinate Mn(2+). Residue R337 is part of the active site. A compositionally biased stretch (low complexity) spans 487–502 (VAPAAPAAPAAPAARP). Residues 487-519 (VAPAAPAAPAAPAARPAAKRTGRSQGGLKRTAP) form a disordered region.

Belongs to the peptidase M17 family. Mn(2+) is required as a cofactor.

Its subcellular location is the cytoplasm. It catalyses the reaction Release of an N-terminal amino acid, Xaa-|-Yaa-, in which Xaa is preferably Leu, but may be other amino acids including Pro although not Arg or Lys, and Yaa may be Pro. Amino acid amides and methyl esters are also readily hydrolyzed, but rates on arylamides are exceedingly low.. The enzyme catalyses Release of an N-terminal amino acid, preferentially leucine, but not glutamic or aspartic acids.. Its function is as follows. Presumably involved in the processing and regular turnover of intracellular proteins. Catalyzes the removal of unsubstituted N-terminal amino acids from various peptides. In Verminephrobacter eiseniae (strain EF01-2), this protein is Probable cytosol aminopeptidase.